The following is a 429-amino-acid chain: Oxysterol-binding protein-like protein OBPalpha (429 aa).

Belongs to the OSBP family.

In Candida albicans (strain SC5314 / ATCC MYA-2876) (Yeast), this protein is Oxysterol-binding protein-like protein OBPalpha (OBPALPHA).